A 64-amino-acid chain; its full sequence is Conotoxin Pn-B01121 (64 aa).

An N-terminal signal peptide occupies residues Met-1–Ala-22. Positions Leu-23 to Asn-48 are excised as a propeptide. Trp-63 is modified (tryptophan amide).

The protein belongs to the conotoxin T superfamily. Post-translationally, contains 2 disulfide bonds that can be either 'C1-C3, C2-C4' or 'C1-C4, C2-C3', since these disulfide connectivities have been observed for conotoxins with cysteine framework V (for examples, see AC P0DQQ7 and AC P81755). As to expression, expressed by the venom duct.

Its subcellular location is the secreted. This Conus pennaceus (Feathered cone) protein is Conotoxin Pn-B01121.